Reading from the N-terminus, the 345-residue chain is UDP-3-O-acylglucosamine N-acyltransferase (345 aa).

The Proton acceptor role is filled by His-241.

This sequence belongs to the transferase hexapeptide repeat family. LpxD subfamily. In terms of assembly, homotrimer.

The enzyme catalyses a UDP-3-O-[(3R)-3-hydroxyacyl]-alpha-D-glucosamine + a (3R)-hydroxyacyl-[ACP] = a UDP-2-N,3-O-bis[(3R)-3-hydroxyacyl]-alpha-D-glucosamine + holo-[ACP] + H(+). The protein operates within bacterial outer membrane biogenesis; LPS lipid A biosynthesis. Functionally, catalyzes the N-acylation of UDP-3-O-acylglucosamine using 3-hydroxyacyl-ACP as the acyl donor. Is involved in the biosynthesis of lipid A, a phosphorylated glycolipid that anchors the lipopolysaccharide to the outer membrane of the cell. The polypeptide is UDP-3-O-acylglucosamine N-acyltransferase (Desulfotalea psychrophila (strain LSv54 / DSM 12343)).